The sequence spans 87 residues: Small ribosomal subunit protein uS17 (87 aa).

Belongs to the universal ribosomal protein uS17 family. Part of the 30S ribosomal subunit.

One of the primary rRNA binding proteins, it binds specifically to the 5'-end of 16S ribosomal RNA. The sequence is that of Small ribosomal subunit protein uS17 from Staphylococcus aureus (strain Mu3 / ATCC 700698).